Reading from the N-terminus, the 201-residue chain is Holliday junction branch migration complex subunit RuvA (201 aa).

Residues 1-64 form a domain I region; that stretch reads MFNSISGILS…EDQMRLFGFP (64 aa). The domain II stretch occupies residues 65–140; sequence NQAERSLFLD…KLTNLNEVSS (76 aa). The flexible linker stretch occupies residues 140–144; that stretch reads SKGQA. The segment at 145 to 201 is domain III; that stretch reads SVSCEYEDIVTALTEMGFERKSVIVQVEKIAEEMKAAGSDPLKNEEELFRRSIVALS.

Belongs to the RuvA family. In terms of assembly, homotetramer. Forms an RuvA(8)-RuvB(12)-Holliday junction (HJ) complex. HJ DNA is sandwiched between 2 RuvA tetramers; dsDNA enters through RuvA and exits via RuvB. An RuvB hexamer assembles on each DNA strand where it exits the tetramer. Each RuvB hexamer is contacted by two RuvA subunits (via domain III) on 2 adjacent RuvB subunits; this complex drives branch migration. In the full resolvosome a probable DNA-RuvA(4)-RuvB(12)-RuvC(2) complex forms which resolves the HJ.

The protein resides in the cytoplasm. The RuvA-RuvB-RuvC complex processes Holliday junction (HJ) DNA during genetic recombination and DNA repair, while the RuvA-RuvB complex plays an important role in the rescue of blocked DNA replication forks via replication fork reversal (RFR). RuvA specifically binds to HJ cruciform DNA, conferring on it an open structure. The RuvB hexamer acts as an ATP-dependent pump, pulling dsDNA into and through the RuvAB complex. HJ branch migration allows RuvC to scan DNA until it finds its consensus sequence, where it cleaves and resolves the cruciform DNA. This chain is Holliday junction branch migration complex subunit RuvA, found in Treponema denticola (strain ATCC 35405 / DSM 14222 / CIP 103919 / JCM 8153 / KCTC 15104).